An 89-amino-acid chain; its full sequence is MAISKEKKNEIIAQYARHEGDTGSVEVQVAVLTWEINHLNGHIKEHKKDHATYRGLMKKIGHRRNLLAYLRRTDVNRYRELIQSLGLRR.

The protein belongs to the universal ribosomal protein uS15 family. Part of the 30S ribosomal subunit. Forms a bridge to the 50S subunit in the 70S ribosome, contacting the 23S rRNA.

Its function is as follows. One of the primary rRNA binding proteins, it binds directly to 16S rRNA where it helps nucleate assembly of the platform of the 30S subunit by binding and bridging several RNA helices of the 16S rRNA. Functionally, forms an intersubunit bridge (bridge B4) with the 23S rRNA of the 50S subunit in the ribosome. The chain is Small ribosomal subunit protein uS15 from Streptococcus uberis (strain ATCC BAA-854 / 0140J).